The chain runs to 274 residues: Protein STAY-GREEN, chloroplastic (274 aa).

The N-terminal 48 residues, 1–48 (MAAATSTMSLLPPITQQQRWHAADSLVVLASRCHNSRRRRRCRYVVPR), are a transit peptide targeting the chloroplast.

Belongs to the staygreen family. As to quaternary structure, interacts with LHCII complex. As to expression, expressed in leaves, roots and developing seeds.

The protein localises to the plastid. The protein resides in the chloroplast membrane. It is found in the chloroplast stroma. Its function is as follows. Involved in the disassembling mechanism of the intact light-harvesting complex of photosystem II (LHCII) in the thylakoid membranes. Required to trigger chlorophyll degradation during natural and dark-induced leaf senescence. The sequence is that of Protein STAY-GREEN, chloroplastic (SGR) from Oryza sativa subsp. japonica (Rice).